The following is a 123-amino-acid chain: Probable histone H2B 4 (123 aa).

The interval 1–30 is disordered; that stretch reads MPPKPSAKGAKKAAKTVVAKPKDGKKRRHA. O-linked (GlcNAc) serine glycosylation is present at Ser-110. A Glycyl lysine isopeptide (Lys-Gly) (interchain with G-Cter in ubiquitin) cross-link involves residue Lys-118.

This sequence belongs to the histone H2B family. The nucleosome is a histone octamer containing two molecules each of H2A, H2B, H3 and H4 assembled in one H3-H4 heterotetramer and two H2A-H2B heterodimers. The octamer wraps approximately 147 bp of DNA. In terms of processing, monoubiquitination of Lys-118 gives a specific tag for epigenetic transcriptional activation and is also prerequisite for histone H3 'Lys-4' and 'Lys-79' methylation. GlcNAcylation at Ser-110 promotes monoubiquitination of Lys-118. It fluctuates in response to extracellular glucose, and associates with transcribed genes.

It localises to the nucleus. It is found in the chromosome. Functionally, core component of nucleosome. Nucleosomes wrap and compact DNA into chromatin, limiting DNA accessibility to the cellular machineries which require DNA as a template. Histones thereby play a central role in transcription regulation, DNA repair, DNA replication and chromosomal stability. DNA accessibility is regulated via a complex set of post-translational modifications of histones, also called histone code, and nucleosome remodeling. This Caenorhabditis elegans protein is Probable histone H2B 4 (his-48).